The sequence spans 216 residues: Phosphoenolpyruvate guanylyltransferase (216 aa).

Phosphoenolpyruvate is bound by residues T150, G165, and S168.

The protein belongs to the CofC family.

It catalyses the reaction phosphoenolpyruvate + GTP + H(+) = enolpyruvoyl-2-diphospho-5'-guanosine + diphosphate. The protein operates within cofactor biosynthesis; coenzyme F420 biosynthesis. In terms of biological role, guanylyltransferase that catalyzes the activation of phosphoenolpyruvate (PEP) as enolpyruvoyl-2-diphospho-5'-guanosine, via the condensation of PEP with GTP. It is involved in the biosynthesis of coenzyme F420, a hydride carrier cofactor. This Mycobacterium leprae (strain Br4923) protein is Phosphoenolpyruvate guanylyltransferase.